Consider the following 217-residue polypeptide: MDTQTLNFNKVHFVTSAPDIRHLPNDGGVEIAFAGRSNAGKSSALNTLTKHKNLARTSKTPGRTQLINLFELEPGKRLVDLPGYGYAQVPLEMKLKWQKSLAEYLQRRESLKGLVILMDIRHPLKDTDMNMLEWSSHRELPVMLLLTKADKLSPGPRNNQVIKVRQAIADLGPQIQVEAFSSLNNIGVEKLAQTLSGWYLAGADEIADNDEQEQVEE.

The region spanning 27 to 201 (GGVEIAFAGR…AQTLSGWYLA (175 aa)) is the EngB-type G domain. Residues 35-42 (GRSNAGKS), 62-66 (GRTQL), 80-83 (DLPG), 147-150 (TKAD), and 180-182 (FSS) each bind GTP. Mg(2+) is bound by residues serine 42 and threonine 64.

This sequence belongs to the TRAFAC class TrmE-Era-EngA-EngB-Septin-like GTPase superfamily. EngB GTPase family. Mg(2+) is required as a cofactor.

In terms of biological role, necessary for normal cell division and for the maintenance of normal septation. In Aeromonas salmonicida (strain A449), this protein is Probable GTP-binding protein EngB.